The sequence spans 61 residues: MMIKRHLPQPRHRERPGALCGSGVPAPAARHPTAVPGGQDQFGSATHHGSDGQTHTGPQIR.

Over residues methionine 1–glutamate 14 the composition is skewed to basic residues. A disordered region spans residues methionine 1–arginine 61. Over residues aspartate 51–arginine 61 the composition is skewed to polar residues.

Its function is as follows. Regulation of the expression of aerolysin. This chain is Aerolysin regulatory protein (aerC), found in Aeromonas sobria.